The primary structure comprises 363 residues: UDP-N-acetylglucosamine--N-acetylmuramyl-(pentapeptide) pyrophosphoryl-undecaprenol N-acetylglucosamine transferase (363 aa).

UDP-N-acetyl-alpha-D-glucosamine is bound by residues 12-14, arginine 166, serine 196, and glutamine 291; that span reads TAG.

Belongs to the glycosyltransferase 28 family. MurG subfamily.

It is found in the cell inner membrane. It catalyses the reaction di-trans,octa-cis-undecaprenyl diphospho-N-acetyl-alpha-D-muramoyl-L-alanyl-D-glutamyl-meso-2,6-diaminopimeloyl-D-alanyl-D-alanine + UDP-N-acetyl-alpha-D-glucosamine = di-trans,octa-cis-undecaprenyl diphospho-[N-acetyl-alpha-D-glucosaminyl-(1-&gt;4)]-N-acetyl-alpha-D-muramoyl-L-alanyl-D-glutamyl-meso-2,6-diaminopimeloyl-D-alanyl-D-alanine + UDP + H(+). It participates in cell wall biogenesis; peptidoglycan biosynthesis. Its function is as follows. Cell wall formation. Catalyzes the transfer of a GlcNAc subunit on undecaprenyl-pyrophosphoryl-MurNAc-pentapeptide (lipid intermediate I) to form undecaprenyl-pyrophosphoryl-MurNAc-(pentapeptide)GlcNAc (lipid intermediate II). In Legionella pneumophila (strain Lens), this protein is UDP-N-acetylglucosamine--N-acetylmuramyl-(pentapeptide) pyrophosphoryl-undecaprenol N-acetylglucosamine transferase.